Consider the following 894-residue polypeptide: Alanine--tRNA ligase (894 aa).

The protein belongs to the class-II aminoacyl-tRNA synthetase family.

It localises to the cytoplasm. The enzyme catalyses tRNA(Ala) + L-alanine + ATP = L-alanyl-tRNA(Ala) + AMP + diphosphate. Catalyzes the attachment of alanine to tRNA(Ala) in a two-step reaction: alanine is first activated by ATP to form Ala-AMP and then transferred to the acceptor end of tRNA(Ala). Also edits incorrectly charged Ser-tRNA(Ala) and Gly-tRNA(Ala) via its editing domain. The polypeptide is Alanine--tRNA ligase (alaS) (Leuconostoc citreum (strain KM20)).